The following is a 336-amino-acid chain: tRNA N6-adenosine threonylcarbamoyltransferase (336 aa).

Residues H114 and H118 each contribute to the Fe cation site. Substrate contacts are provided by residues 136–140 (LVSGG), D169, G182, D186, and N275. D301 contacts Fe cation.

This sequence belongs to the KAE1 / TsaD family. Fe(2+) serves as cofactor.

The protein resides in the cytoplasm. It catalyses the reaction L-threonylcarbamoyladenylate + adenosine(37) in tRNA = N(6)-L-threonylcarbamoyladenosine(37) in tRNA + AMP + H(+). In terms of biological role, required for the formation of a threonylcarbamoyl group on adenosine at position 37 (t(6)A37) in tRNAs that read codons beginning with adenine. Is involved in the transfer of the threonylcarbamoyl moiety of threonylcarbamoyl-AMP (TC-AMP) to the N6 group of A37, together with TsaE and TsaB. TsaD likely plays a direct catalytic role in this reaction. In Streptococcus pneumoniae (strain ATCC 700669 / Spain 23F-1), this protein is tRNA N6-adenosine threonylcarbamoyltransferase.